Reading from the N-terminus, the 199-residue chain is NAD(P)H dehydrogenase (quinone) (199 aa).

The Flavodoxin-like domain maps to 4–190; that stretch reads ILVLYYSTYG…DGARFQGRHV (187 aa). Residues 10 to 15 and 78 to 80 each bind FMN; these read STYGHI and TRF. Tyr12 is a binding site for NAD(+). Substrate is bound at residue Trp98. Residues 113 to 119 and His134 contribute to the FMN site; that span reads STATQHG.

The protein belongs to the WrbA family. The cofactor is FMN.

It carries out the reaction a quinone + NADH + H(+) = a quinol + NAD(+). The enzyme catalyses a quinone + NADPH + H(+) = a quinol + NADP(+). This Rhizorhabdus wittichii (strain DSM 6014 / CCUG 31198 / JCM 15750 / NBRC 105917 / EY 4224 / RW1) (Sphingomonas wittichii) protein is NAD(P)H dehydrogenase (quinone).